We begin with the raw amino-acid sequence, 309 residues long: ATP synthase gamma chain (309 aa).

It belongs to the ATPase gamma chain family. F-type ATPases have 2 components, CF(1) - the catalytic core - and CF(0) - the membrane proton channel. CF(1) has five subunits: alpha(3), beta(3), gamma(1), delta(1), epsilon(1). CF(0) has three main subunits: a, b and c.

The protein resides in the cell membrane. In terms of biological role, produces ATP from ADP in the presence of a proton gradient across the membrane. The gamma chain is believed to be important in regulating ATPase activity and the flow of protons through the CF(0) complex. The chain is ATP synthase gamma chain from Ligilactobacillus salivarius (strain UCC118) (Lactobacillus salivarius).